The primary structure comprises 242 residues: Demethylmenaquinone methyltransferase (242 aa).

Residues T74 and D93 each contribute to the S-adenosyl-L-methionine site.

This sequence belongs to the class I-like SAM-binding methyltransferase superfamily. MenG/UbiE family.

It carries out the reaction a 2-demethylmenaquinol + S-adenosyl-L-methionine = a menaquinol + S-adenosyl-L-homocysteine + H(+). It functions in the pathway quinol/quinone metabolism; menaquinone biosynthesis; menaquinol from 1,4-dihydroxy-2-naphthoate: step 2/2. Functionally, methyltransferase required for the conversion of demethylmenaquinol (DMKH2) to menaquinol (MKH2). The protein is Demethylmenaquinone methyltransferase of Chlorobaculum tepidum (strain ATCC 49652 / DSM 12025 / NBRC 103806 / TLS) (Chlorobium tepidum).